The following is a 621-amino-acid chain: Threonine--tRNA ligase (621 aa).

The editing domain stretch occupies residues 1 to 137 (MRILQLHCDS…ESSKVVTKDS (137 aa)). The interval 128 to 150 (ESSKVVTKDSTTKDDDEDTSDAL) is disordered. Residues 202–501 (PHVALMKKLA…SKKGKKPQLP (300 aa)) form a catalytic region. The Zn(2+) site is built by Cys-294, His-346, and His-470. A compositionally biased stretch (polar residues) spans 598–612 (QTSGKPYTGLNQSQH). Residues 598–621 (QTSGKPYTGLNQSQHLSKRPQLMV) are disordered.

It belongs to the class-II aminoacyl-tRNA synthetase family. In terms of assembly, homodimer. Requires Zn(2+) as cofactor.

Its subcellular location is the cytoplasm. It carries out the reaction tRNA(Thr) + L-threonine + ATP = L-threonyl-tRNA(Thr) + AMP + diphosphate + H(+). Functionally, catalyzes the attachment of threonine to tRNA(Thr) in a two-step reaction: L-threonine is first activated by ATP to form Thr-AMP and then transferred to the acceptor end of tRNA(Thr). Also edits incorrectly charged L-seryl-tRNA(Thr). The protein is Threonine--tRNA ligase of Nitrosopumilus maritimus (strain SCM1).